The chain runs to 1715 residues: MLYAACGGTQRGISFNDLLCGLVLITRGTQAEKTKFLWNLYCNDAGTFIIKSDYVRNVNLAPFESVSLFAQSERVNFEQFQDWIIKHRNATVLSKWLLSDNCVSLTSELETPTFYQSLAGVTHLEEKDIGDLEKEFWRLKNTSQNGQIDLQFLGPLISPPIPKNALAGLFNAFDENRDGHIDFKELCCGVSAACRGPGVERTRFCFKIFDVDRDGVLSHDETLQMINVLLLVAKENQESQQYKDLTKQLVISDLLEFGQRRSPDGTPSKLTRDNVSLTAEDFMLWTVQCDLRLMQPLLDLIFELCHIVFGLWPQCKHMENDIVRGWLRREERRPYRVGQFWYLITHDWWLSWMQYTQHTTHTCDYCKRTASQRTAVDEALVCDESFNTHSLEQHDSYSLGSGTGSASGSGSASSGISAGRHCGPVRPGPIDNSNLITANPFRNVRTLTGEGGHLKRDTPLVQNHDFELVPKSLWKALNRWYGDNLPLPRQVIQPPNSDVELELYPLNLRILLHQAQPSQTGVGGGTQLGSWGSTVSGGYGVLASGGGYAAIAVSSVLQPPKRYLAYTAAFSRLATVRQVGEFLCEQLRLKSEDIRLWHVPQLDNGAILLEEDAMCLKELLIRDNDQLLLEIRNKDLTWPEELGSLATAQCGQGAGTPGDRRRLTRSSIMSVHAPGATGLHNLGNTCFMNAALQVLFNTQPLAQYFQREMHRFEVNAANKLGTKGQLAMRYAELLKEVWTATTRSVAPLKLRFCVNKYAPQFAGGGQHDSQELLEWLLDALHEDLNRVMEKPYSELKDSNGRPDKIVAAEAWSQHHARNQSIIIDLFYGQLKSKVSCLGCGHESVRFDPFSLLSLPLPVENYIYFEVLVILLDGSVPIKYGFRLNSDCKYSHLKHKLSTMCSLPPNLMLVCELWNSQIRQVLNDDEKLRTQSAKELYVYQLPEQSMRTRSNSGLSMHIEQGLKDIQRSSALITSAQDSLSSLSTLQTSSHRASSRVLCNGHVSGLDVEGEAEVGTDVSQCNSNSNYNPIVSTYSGNGSGDNQVHELLPDEAGKVSRCFGKRECMPHSLFCFKESLILSSSPENTFMHGAAAQQKRVSSAKLLHTESNTSSMSYTNHSGENSMESSLTEPIPLADLEPVSSRNGSGGEDCSYRTSPNDSSGLSTGHTLGASLDVDEQAEEGNAEDHDQPDQITTSQPETSSGVYSRRSSQPPHKAGKYLVAVHRKITRHDSYFLSYHKTRPSLFGVPLLIPNSEGGTHKDLYCAVWLQVSRLLSPLPATTEQANHAADCDDSLGYDFPFTLRAVKADGLTCAICPWSSFCRGCEIRCNNDYVLQGALPPINAAASNTSTPKMNAKFPSLPNLEAKRTPEYTASLSYTPTTKYFEDFTIAIDWDPTALHLRYQSTLERLWVDHETIAISRREQVEPVDLNHCLRAFTSEEKLEQWYHCSHCKGKKPATKKLQIWKLPPILIVHLKRFNCVNGKWVKSQKVVHFPFDDFDPTPYLASVPQETILRHKELLELKNDAEMTMATNEVVSELDEIDAPSKEVKEELPNQTGSTKATASPPPTGNILRQSKTKNAVRRQRLISTSLTKTPIVDGEFEDYHQHRLKPDVDQFDPRYRLYAVVSHSGMLNGGHYISYASNATGSWYCYNDSSCREISQKPVIDPSAAYLLFYERKGLDYEPYLPNIEGRTLPNTASVPLEVDETEGELKKLCSIS.

EF-hand domains lie at 161-196 and 197-232; these read IPKNALAGLFNAFDENRDGHIDFKELCCGVSAACRG and PGVERTRFCFKIFDVDRDGVLSHDETLQMINVLLLV. Positions 174, 176, 178, 180, 185, 210, 212, 214, and 221 each coordinate Ca(2+). The DUSP domain occupies 314–492; that stretch reads QCKHMENDIV…DNLPLPRQVI (179 aa). The tract at residues 393 to 429 is disordered; the sequence is QHDSYSLGSGTGSASGSGSASSGISAGRHCGPVRPGP. The segment covering 408 to 419 has biased composition (low complexity); it reads GSGSASSGISAG. Residues 677–1675 form the USP domain; sequence TGLHNLGNTC…AAYLLFYERK (999 aa). C686 serves as the catalytic Nucleophile. Composition is skewed to polar residues over residues 1103 to 1126 and 1150 to 1164; these read TESNTSSMSYTNHSGENSMESSLT and YRTSPNDSSGLSTGH. 2 disordered regions span residues 1103 to 1213 and 1536 to 1569; these read TESN…PHKA and DEIDAPSKEVKEELPNQTGSTKATASPPPTGNIL. A compositionally biased stretch (acidic residues) spans 1171 to 1180; sequence DVDEQAEEGN. Polar residues predominate over residues 1188–1209; it reads DQITTSQPETSSGVYSRRSSQP. A compositionally biased stretch (basic and acidic residues) spans 1540-1549; that stretch reads APSKEVKEEL. Residues 1550–1559 show a composition bias toward polar residues; that stretch reads PNQTGSTKAT. H1633 (proton acceptor) is an active-site residue.

This sequence belongs to the peptidase C19 family. USP20/USP33 subfamily.

The enzyme catalyses Thiol-dependent hydrolysis of ester, thioester, amide, peptide and isopeptide bonds formed by the C-terminal Gly of ubiquitin (a 76-residue protein attached to proteins as an intracellular targeting signal).. In terms of biological role, deubiquitinating enzyme that acts as an inhibitor of mitophagy probably by counteracting the action of park. Possibly functions by hydrolyzing ubiquitin attached by park on target proteins, thereby reducing park's ability to drive mitophagy. This Drosophila melanogaster (Fruit fly) protein is Ubiquitin carboxyl-terminal hydrolase 32.